A 459-amino-acid chain; its full sequence is Bifunctional protein GlmU (459 aa).

Residues 1–229 (MSNYAIILAA…FDESLGVNDR (229 aa)) are pyrophosphorylase. UDP-N-acetyl-alpha-D-glucosamine is bound by residues 8-11 (LAAG), lysine 22, glutamine 72, and 77-78 (GT). Mg(2+) is bound at residue aspartate 102. 4 residues coordinate UDP-N-acetyl-alpha-D-glucosamine: glycine 139, glutamate 154, asparagine 169, and asparagine 227. Asparagine 227 serves as a coordination point for Mg(2+). Residues 230-250 (VALATAEKVMRHRIARQHMVN) are linker. Residues 251-459 (GVTVVNPDSA…NKKPHHPSQK (209 aa)) form an N-acetyltransferase region. UDP-N-acetyl-alpha-D-glucosamine is bound by residues arginine 332 and lysine 350. The active-site Proton acceptor is histidine 362. Residues tyrosine 365 and asparagine 376 each contribute to the UDP-N-acetyl-alpha-D-glucosamine site. Residues alanine 379, 385–386 (NY), serine 404, alanine 422, and arginine 439 contribute to the acetyl-CoA site.

This sequence in the N-terminal section; belongs to the N-acetylglucosamine-1-phosphate uridyltransferase family. The protein in the C-terminal section; belongs to the transferase hexapeptide repeat family. As to quaternary structure, homotrimer. Requires Mg(2+) as cofactor.

The protein resides in the cytoplasm. The catalysed reaction is alpha-D-glucosamine 1-phosphate + acetyl-CoA = N-acetyl-alpha-D-glucosamine 1-phosphate + CoA + H(+). It carries out the reaction N-acetyl-alpha-D-glucosamine 1-phosphate + UTP + H(+) = UDP-N-acetyl-alpha-D-glucosamine + diphosphate. The protein operates within nucleotide-sugar biosynthesis; UDP-N-acetyl-alpha-D-glucosamine biosynthesis; N-acetyl-alpha-D-glucosamine 1-phosphate from alpha-D-glucosamine 6-phosphate (route II): step 2/2. It participates in nucleotide-sugar biosynthesis; UDP-N-acetyl-alpha-D-glucosamine biosynthesis; UDP-N-acetyl-alpha-D-glucosamine from N-acetyl-alpha-D-glucosamine 1-phosphate: step 1/1. Its pathway is bacterial outer membrane biogenesis; LPS lipid A biosynthesis. Functionally, catalyzes the last two sequential reactions in the de novo biosynthetic pathway for UDP-N-acetylglucosamine (UDP-GlcNAc). The C-terminal domain catalyzes the transfer of acetyl group from acetyl coenzyme A to glucosamine-1-phosphate (GlcN-1-P) to produce N-acetylglucosamine-1-phosphate (GlcNAc-1-P), which is converted into UDP-GlcNAc by the transfer of uridine 5-monophosphate (from uridine 5-triphosphate), a reaction catalyzed by the N-terminal domain. The chain is Bifunctional protein GlmU from Streptococcus agalactiae serotype III (strain NEM316).